The primary structure comprises 555 residues: Phosphomethylpyrimidine synthase (555 aa).

Substrate is bound by residues N191, M220, Y249, H285, 305–307 (SRG), 346–349 (DGLR), and E385. H389 serves as a coordination point for Zn(2+). Y412 lines the substrate pocket. H453 serves as a coordination point for Zn(2+). 3 residues coordinate [4Fe-4S] cluster: C533, C536, and C541.

It belongs to the ThiC family. As to quaternary structure, homodimer. [4Fe-4S] cluster serves as cofactor.

The catalysed reaction is 5-amino-1-(5-phospho-beta-D-ribosyl)imidazole + S-adenosyl-L-methionine = 4-amino-2-methyl-5-(phosphooxymethyl)pyrimidine + CO + 5'-deoxyadenosine + formate + L-methionine + 3 H(+). It functions in the pathway cofactor biosynthesis; thiamine diphosphate biosynthesis. Catalyzes the synthesis of the hydroxymethylpyrimidine phosphate (HMP-P) moiety of thiamine from aminoimidazole ribotide (AIR) in a radical S-adenosyl-L-methionine (SAM)-dependent reaction. The chain is Phosphomethylpyrimidine synthase from Ehrlichia ruminantium (strain Welgevonden).